The following is a 146-amino-acid chain: Hemoglobin subunit beta (146 aa).

Val1 carries the N-acetylvaline modification. One can recognise a Globin domain in the interval 2 to 146 (HLTPDEKNAV…VANALAHKYH (145 aa)). Thr12 carries the phosphothreonine modification. Ser44 is subject to Phosphoserine. Lys59 bears the N6-acetyllysine mark. His63 provides a ligand contact to heme b. Lys82 carries the N6-acetyllysine modification. Position 92 (His92) interacts with heme b. Cys93 is modified (S-nitrosocysteine). N6-acetyllysine is present on Lys144.

Belongs to the globin family. As to quaternary structure, heterotetramer of two alpha chains and two beta chains. In terms of tissue distribution, red blood cells.

Involved in oxygen transport from the lung to the various peripheral tissues. The chain is Hemoglobin subunit beta (HBB) from Piliocolobus badius (Western red colobus).